A 127-amino-acid chain; its full sequence is NADPH-dependent 7-cyano-7-deazaguanine reductase (127 aa).

Catalysis depends on Cys40, which acts as the Thioimide intermediate. Asp47 serves as the catalytic Proton donor. Residues 62 to 64 (VEL) and 81 to 82 (HE) contribute to the substrate site.

This sequence belongs to the GTP cyclohydrolase I family. QueF type 1 subfamily.

It is found in the cytoplasm. It carries out the reaction 7-aminomethyl-7-carbaguanine + 2 NADP(+) = 7-cyano-7-deazaguanine + 2 NADPH + 3 H(+). Its pathway is tRNA modification; tRNA-queuosine biosynthesis. Catalyzes the NADPH-dependent reduction of 7-cyano-7-deazaguanine (preQ0) to 7-aminomethyl-7-deazaguanine (preQ1). This Campylobacter jejuni subsp. jejuni serotype O:6 (strain 81116 / NCTC 11828) protein is NADPH-dependent 7-cyano-7-deazaguanine reductase.